A 524-amino-acid chain; its full sequence is Cytokinin dehydrogenase 7 (524 aa).

A signal peptide spans 1–22; it reads MAARCSIAFMIMASCLSVVVSG. An N-linked (GlcNAc...) asparagine glycan is attached at Asn-42. Positions 55–233 constitute an FAD-binding PCMH-type domain; the sequence is VAAAPEAVLH…TRARIGLMPA (179 aa). FAD is bound by residues Gly-91 and Gly-93. Pros-8alpha-FAD histidine is present on His-94. FAD contacts are provided by Ser-95 and Gln-99. The N-linked (GlcNAc...) asparagine glycan is linked to Asn-121. 5 residues coordinate FAD: Asp-157, Thr-162, Ser-168, Ile-172, and Ile-223. N-linked (GlcNAc...) asparagine glycans are attached at residues Asn-277 and Asn-320. The FAD site is built by Tyr-472, Ser-507, and Gln-510.

The protein belongs to the oxygen-dependent FAD-linked oxidoreductase family. Monomer. FAD is required as a cofactor.

It is found in the secreted. The protein resides in the extracellular space. It catalyses the reaction N(6)-dimethylallyladenine + A + H2O = 3-methyl-2-butenal + adenine + AH2. Catalyzes the oxidation of cytokinins, a family of N(6)-substituted adenine derivatives that are plant hormones, where the substituent is an isopentenyl group. This Oryza sativa subsp. japonica (Rice) protein is Cytokinin dehydrogenase 7 (CKX7).